Reading from the N-terminus, the 240-residue chain is Ubiquinone biosynthesis O-methyltransferase (240 aa).

S-adenosyl-L-methionine is bound by residues Arg36, Gly60, Asp81, and Leu123.

This sequence belongs to the methyltransferase superfamily. UbiG/COQ3 family.

It carries out the reaction a 3-demethylubiquinol + S-adenosyl-L-methionine = a ubiquinol + S-adenosyl-L-homocysteine + H(+). The enzyme catalyses a 3-(all-trans-polyprenyl)benzene-1,2-diol + S-adenosyl-L-methionine = a 2-methoxy-6-(all-trans-polyprenyl)phenol + S-adenosyl-L-homocysteine + H(+). It functions in the pathway cofactor biosynthesis; ubiquinone biosynthesis. O-methyltransferase that catalyzes the 2 O-methylation steps in the ubiquinone biosynthetic pathway. This Rickettsia bellii (strain OSU 85-389) protein is Ubiquinone biosynthesis O-methyltransferase.